A 349-amino-acid chain; its full sequence is Uroporphyrinogen decarboxylase (349 aa).

Substrate-binding positions include 23 to 27, Asp71, Tyr148, Ser203, and His317; that span reads RQAGR.

It belongs to the uroporphyrinogen decarboxylase family. As to quaternary structure, homodimer.

It localises to the cytoplasm. It catalyses the reaction uroporphyrinogen III + 4 H(+) = coproporphyrinogen III + 4 CO2. Its pathway is porphyrin-containing compound metabolism; protoporphyrin-IX biosynthesis; coproporphyrinogen-III from 5-aminolevulinate: step 4/4. In terms of biological role, catalyzes the decarboxylation of four acetate groups of uroporphyrinogen-III to yield coproporphyrinogen-III. In Sorangium cellulosum (strain So ce56) (Polyangium cellulosum (strain So ce56)), this protein is Uroporphyrinogen decarboxylase.